A 275-amino-acid chain; its full sequence is Putative carbamate hydrolase RutD (275 aa).

It belongs to the AB hydrolase superfamily. Hydrolase RutD family.

The enzyme catalyses carbamate + 2 H(+) = NH4(+) + CO2. Functionally, involved in pyrimidine catabolism. May facilitate the hydrolysis of carbamate, a reaction that can also occur spontaneously. This chain is Putative carbamate hydrolase RutD, found in Escherichia coli O6:H1 (strain CFT073 / ATCC 700928 / UPEC).